Reading from the N-terminus, the 310-residue chain is HPr kinase/phosphorylase (310 aa).

Catalysis depends on residues His138 and Lys159. Gly153–Ser160 provides a ligand contact to ATP. Ser160 contacts Mg(2+). Asp177 functions as the Proton acceptor; for phosphorylation activity. Proton donor; for dephosphorylation activity in the catalytic mechanism. Residues Ile201–Asp210 are important for the catalytic mechanism of both phosphorylation and dephosphorylation. Position 202 (Glu202) interacts with Mg(2+). Arg243 is an active-site residue. The interval Pro264–Arg269 is important for the catalytic mechanism of dephosphorylation.

It belongs to the HPrK/P family. Homohexamer. It depends on Mg(2+) as a cofactor.

It catalyses the reaction [HPr protein]-L-serine + ATP = [HPr protein]-O-phospho-L-serine + ADP + H(+). The enzyme catalyses [HPr protein]-O-phospho-L-serine + phosphate + H(+) = [HPr protein]-L-serine + diphosphate. Its function is as follows. Catalyzes the ATP- as well as the pyrophosphate-dependent phosphorylation of a specific serine residue in HPr, a phosphocarrier protein of the phosphoenolpyruvate-dependent sugar phosphotransferase system (PTS). HprK/P also catalyzes the pyrophosphate-producing, inorganic phosphate-dependent dephosphorylation (phosphorolysis) of seryl-phosphorylated HPr (P-Ser-HPr). The two antagonistic activities of HprK/P are regulated by several intracellular metabolites, which change their concentration in response to the absence or presence of rapidly metabolisable carbon sources (glucose, fructose, etc.) in the growth medium. Therefore, by controlling the phosphorylation state of HPr, HPrK/P is a sensor enzyme that plays a major role in the regulation of carbon metabolism and sugar transport: it mediates carbon catabolite repression (CCR), and regulates PTS-catalyzed carbohydrate uptake and inducer exclusion. This Lactococcus lactis subsp. cremoris (strain SK11) protein is HPr kinase/phosphorylase.